Consider the following 408-residue polypeptide: Putative polysaccharide ligase RBE_0399 (408 aa).

10 consecutive transmembrane segments (helical) span residues 5–25, 72–92, 94–114, 130–150, 163–183, 192–212, 230–250, 325–345, 359–377, and 380–400; these read FFIF…AATV, MTIK…LFAI, PINS…GFVV, LIFG…SYGF, MLDR…AILI, LILY…ASFL, IFSK…PIIA, ILQI…SLVY, FRAS…GMIS, and VWQI…KLLV.

The protein belongs to the O-antigen ligase family.

The protein resides in the membrane. This chain is Putative polysaccharide ligase RBE_0399 (rfaL), found in Rickettsia bellii (strain RML369-C).